The chain runs to 315 residues: Replication factor C small subunit (315 aa).

An ATP-binding site is contributed by G43–T50.

It belongs to the activator 1 small subunits family. RfcS subfamily. As to quaternary structure, heteromultimer composed of small subunits (RfcS) and large subunits (RfcL).

Functionally, part of the RFC clamp loader complex which loads the PCNA sliding clamp onto DNA. The protein is Replication factor C small subunit of Methanococcus maripaludis (strain C6 / ATCC BAA-1332).